Here is a 305-residue protein sequence, read N- to C-terminus: Protoheme IX farnesyltransferase (305 aa).

9 helical membrane-spanning segments follow: residues 29–49, 51–71, 101–121, 123–143, 151–171, 177–197, 221–241, 244–264, and 283–303; these read VTQL…PGMV, WSVL…AFAI, TLIF…VFAN, LTMW…TILL, IVIG…AVSG, AWFL…ALAL, LLHI…PFVY, SGYI…GYAW, and ILYL…KFVP.

Belongs to the UbiA prenyltransferase family. Protoheme IX farnesyltransferase subfamily.

It localises to the cell inner membrane. It catalyses the reaction heme b + (2E,6E)-farnesyl diphosphate + H2O = Fe(II)-heme o + diphosphate. Its pathway is porphyrin-containing compound metabolism; heme O biosynthesis; heme O from protoheme: step 1/1. In terms of biological role, converts heme B (protoheme IX) to heme O by substitution of the vinyl group on carbon 2 of heme B porphyrin ring with a hydroxyethyl farnesyl side group. In Cupriavidus metallidurans (strain ATCC 43123 / DSM 2839 / NBRC 102507 / CH34) (Ralstonia metallidurans), this protein is Protoheme IX farnesyltransferase.